Here is a 237-residue protein sequence, read N- to C-terminus: Large ribosomal subunit protein uL1 (237 aa).

This sequence belongs to the universal ribosomal protein uL1 family. In terms of assembly, part of the 50S ribosomal subunit.

In terms of biological role, binds directly to 23S rRNA. The L1 stalk is quite mobile in the ribosome, and is involved in E site tRNA release. Protein L1 is also a translational repressor protein, it controls the translation of the L11 operon by binding to its mRNA. This Thermosynechococcus vestitus (strain NIES-2133 / IAM M-273 / BP-1) protein is Large ribosomal subunit protein uL1.